The primary structure comprises 360 residues: Protein RecA (360 aa).

Residue 77-84 coordinates ATP; sequence GPESSGKT.

It belongs to the RecA family.

The protein localises to the cytoplasm. Can catalyze the hydrolysis of ATP in the presence of single-stranded DNA, the ATP-dependent uptake of single-stranded DNA by duplex DNA, and the ATP-dependent hybridization of homologous single-stranded DNAs. It interacts with LexA causing its activation and leading to its autocatalytic cleavage. This Chelativorans sp. (strain BNC1) protein is Protein RecA.